The following is a 293-amino-acid chain: Protease HtpX (293 aa).

2 consecutive transmembrane segments (helical) span residues 4-24 (IALF…VLSL) and 32-52 (VTGL…VSLL). H139 is a Zn(2+) binding site. E140 is an active-site residue. Residue H143 participates in Zn(2+) binding. Transmembrane regions (helical) follow at residues 158 to 178 (VVNT…AGFL) and 193 to 213 (LIYF…ASII). E222 is a binding site for Zn(2+).

The protein belongs to the peptidase M48B family. Zn(2+) is required as a cofactor.

The protein resides in the cell inner membrane. This chain is Protease HtpX, found in Cronobacter sakazakii (strain ATCC BAA-894) (Enterobacter sakazakii).